A 727-amino-acid chain; its full sequence is MSEQKVKLMEEEMNVYRVQGFTCANCAGKFEKNVKKIPGVQDAKVNFGASKIDVYGNASVEELEKAGAFENLKVSPEKLANQTIQRVKDDTKAHKEEKTPFYKKHSTLLFATLLIAFGYLSHFVNGEDNLVTSMLFVGSIVIGGYSLFKVGFQNLIRFDFDMKTLMTVAVIGATIIGKWAEASIVVILFAISEALERFSMDRSRQSIRSLMDIAPKEALVRRNGQEIIIHVDDIAVGDIMIVKPGEKIAMDGIIVNGLSAVNQAAITGESVPVSKAVDDEVFAGTLNEEGLIEVKITKYVEDTTITKIIHLVEEAQGERAPAQAFVDKFAKYYTPIIMVIAALVAVVPPLFFGGSWDTWVYQGLAVLVVGCPCALVISTPISIVSAIGNAAKKGVLVKGGVYLEKLGAIKTVAFDKTGTLTKGVPVVTDFEVLNDQVEEKELFSIITALEYRSQHPLASAIMKKAEQDNIPYSNVQVEEFTSITGRGIKGIVNGTTYYIGSPKLFKELNVSDFSLGFENNVKILQNQGKTAMIIGTEKTILGVIAVADEVRETSKNVIQKLHQLGIKQTIMLTGDNQGTANAIGTHVGVSDIQSELMPQDKLDYIKKMQSEYDNVAMIGDGVNDAPALAASTVGIAMGGAGTDTAIETADIALMGDDLSKLPFAVRLSRKTLNIIKANITFAIGIKIIALLLVIPGWLTLWIAILSDMGATILVALNSLRLMRVKDK.

An HMA domain is found at 12–75 (EMNVYRVQGF…AGAFENLKVS (64 aa)). 2 residues coordinate Cd(2+): C23 and C26. 5 helical membrane passes run 106–126 (STLL…FVNG), 130–150 (LVTS…LFKV), 171–191 (IGAT…LFAI), 336–356 (IIMV…GGSW), and 364–384 (LAVL…ISIV). The 4-aspartylphosphate intermediate role is filled by D415. A run of 2 helical transmembrane segments spans residues 672-694 (LNII…LLVI) and 699-721 (TLWI…SLRL).

The protein belongs to the cation transport ATPase (P-type) (TC 3.A.3) family. Type IB subfamily.

It localises to the cell membrane. It catalyses the reaction Cd(2+)(in) + ATP + H2O = Cd(2+)(out) + ADP + phosphate + H(+). Inhibited by the antibiotic bafilomycin A1. Partially inhibited by DCCD, nigericin and FCCP. In terms of biological role, couples the hydrolysis of ATP with the export of cadmium. Involved in cadmium resistance. This is Cadmium-transporting ATPase from Staphylococcus aureus.